A 352-amino-acid chain; its full sequence is MLQLDFHQQLGSLELHVQSELPANGITAIFGVSGAGKTSLINAVVGLTRPDGGRIVLNDHVLVDTQQRVFLPPEKRHIGYVFQDARLFPHYRVRGNLRYGMAEKMASQFDDIVNLLGIEHLLNRYPLTLSGGEKQRVAIGRALLTAPELLLMDEPLASLDLPRKRELLPYLERLAKEVNIPILYVSHSLEEIVRLADHVVVLDKGKVKAQGLLEEVWASSALRPWLPKDEQSSILSVRVLAQHEHYAMTALALDDQQVWVGKVELAQDAVLRIRVNAADVSLVLQPPEKSSIRNVLRASVEECIDVDGQVEVKLAVGQQTLWSRITPWARDDLALHPGQMLYAQIKSVSITA.

One can recognise an ABC transporter domain in the interval 1 to 229 (MLQLDFHQQL…SALRPWLPKD (229 aa)). 31–38 (GVSGAGKT) contributes to the ATP binding site. One can recognise a Mop domain in the interval 289–352 (KSSIRNVLRA…AQIKSVSITA (64 aa)).

The protein belongs to the ABC transporter superfamily. Molybdate importer (TC 3.A.1.8) family. As to quaternary structure, the complex is composed of two ATP-binding proteins (ModC), two transmembrane proteins (ModB) and a solute-binding protein (ModA).

The protein resides in the cell inner membrane. The enzyme catalyses molybdate(out) + ATP + H2O = molybdate(in) + ADP + phosphate + H(+). Part of the ABC transporter complex ModABC involved in molybdenum import. Responsible for energy coupling to the transport system. The polypeptide is Molybdenum import ATP-binding protein ModC (Pectobacterium atrosepticum (strain SCRI 1043 / ATCC BAA-672) (Erwinia carotovora subsp. atroseptica)).